Here is a 97-residue protein sequence, read N- to C-terminus: ATP-dependent Clp protease adapter protein ClpS (97 aa).

This sequence belongs to the ClpS family. Binds to the N-terminal domain of the chaperone ClpA.

Functionally, involved in the modulation of the specificity of the ClpAP-mediated ATP-dependent protein degradation. The polypeptide is ATP-dependent Clp protease adapter protein ClpS (Nostoc sp. (strain PCC 7120 / SAG 25.82 / UTEX 2576)).